We begin with the raw amino-acid sequence, 185 residues long: Prenylated Rab acceptor protein 1 (185 aa).

The Cytoplasmic portion of the chain corresponds to 1 to 78 (MAAQKDQQKD…RNVEYYQSNY (78 aa)). Positions 30-54 (AGREWLERRRATIRPWGTFVDQQRF) are required for interaction with prenylated RAB3A and VAMP2. A run of 2 helical transmembrane segments spans residues 79–94 (VFVF…VTSP) and 95–112 (MLLV…ILYL). The Cytoplasmic segment spans residues 113–131 (RTLQSKLVLFGREVSPAHQ). Helical transmembrane passes span 132–148 (YALA…LAGA) and 149–165 (GSAV…LIGS). The segment at 165–185 (SHAAFHQIEPADGEELQMEPV) is required for interaction with GDI1. Over 166–185 (HAAFHQIEPADGEELQMEPV) the chain is Cytoplasmic. The interval 175–185 (ADGEELQMEPV) is required for interaction with prenylated RAB3A and VAMP2. Residues 175 to 185 (ADGEELQMEPV) form a homodimerization region.

Belongs to the PRA1 family. Homodimers. Interacts specifically with both prenylated Rab proteins (including RAB3A and RAB1), and VAMP2 (synaptobrevin-2), in an exclusive way. Interacts with NDRG1. Interacts with free GDI1 in the absence of Rab proteins. Also interacts with PCLO. As to expression, ubiquitous.

Its subcellular location is the cell membrane. It is found in the cytoplasm. The protein localises to the golgi apparatus. The protein resides in the cytoplasmic vesicle. It localises to the secretory vesicle. Its subcellular location is the synaptic vesicle. Functionally, general Rab protein regulator required for vesicle formation from the Golgi complex. May control vesicle docking and fusion by mediating the action of Rab GTPases to the SNARE complexes. In addition it inhibits the removal of Rab GTPases from the membrane by GDI1. The protein is Prenylated Rab acceptor protein 1 (Rabac1) of Rattus norvegicus (Rat).